The chain runs to 138 residues: Large ribosomal subunit protein uL16 (138 aa).

The protein belongs to the universal ribosomal protein uL16 family. As to quaternary structure, part of the 50S ribosomal subunit.

Binds 23S rRNA and is also seen to make contacts with the A and possibly P site tRNAs. In Acidiphilium cryptum (strain JF-5), this protein is Large ribosomal subunit protein uL16.